The sequence spans 49 residues: Osteocalcin (49 aa).

One can recognise a Gla domain in the interval 1-47; it reads YLDHGLGAPAPYPDPLEPKREVCELNPDCDELADHIGFQEAYRRFYG. The residue at position 9 (proline 9) is a Hydroxyproline. Ca(2+)-binding residues include glutamate 17, glutamate 21, glutamate 24, and aspartate 30. Glutamate 17, glutamate 21, and glutamate 24 each carry 4-carboxyglutamate. A disulfide bridge connects residues cysteine 23 and cysteine 29.

Belongs to the osteocalcin/matrix Gla protein family. Post-translationally, gamma-carboxyglutamic acid residues are formed by vitamin K dependent carboxylation. These residues are essential for the binding of calcium.

The protein localises to the secreted. Functionally, the carboxylated form is one of the main organic components of the bone matrix, which constitutes 1-2% of the total bone protein: it acts as a negative regulator of bone formation and is required to limit bone formation without impairing bone resorption or mineralization. The carboxylated form binds strongly to apatite and calcium. The uncarboxylated form acts as a hormone secreted by osteoblasts, which regulates different cellular processes, such as energy metabolism, male fertility and brain development. Regulates of energy metabolism by acting as a hormone favoring pancreatic beta-cell proliferation, insulin secretion and sensitivity and energy expenditure. Uncarboxylated osteocalcin hormone also promotes testosterone production in the testes: acts as a ligand for G protein-coupled receptor GPRC6A at the surface of Leydig cells, initiating a signaling response that promotes the expression of enzymes required for testosterone synthesis in a CREB-dependent manner. Also acts as a regulator of brain development: osteocalcin hormone crosses the blood-brain barrier and acts as a ligand for GPR158 on neurons, initiating a signaling response that prevents neuronal apoptosis in the hippocampus, favors the synthesis of all monoamine neurotransmitters and inhibits that of gamma-aminobutyric acid (GABA). Osteocalcin also crosses the placenta during pregnancy and maternal osteocalcin is required for fetal brain development. This is Osteocalcin (BGLAP) from Bison priscus (Steppe wisent).